We begin with the raw amino-acid sequence, 512 residues long: MGCIKSKGKDSLSDDGVDLKTQPVRNTERTIYVRDPTSNKQQRPVPESQLLPGQRFQTKDPEEQGDIVVALYPYDGIHPDDLSFKKGEKMKVLEEHGEWWKAKSLLTKKEGFIPSNYVAKLNTLETEEWFFKDITRKDAERQLLAPGNSAGAFLIRESETLKGSFSLSVRDFDPVHGDVIKHYKIRSLDNGGYYISPRITFPCISDMIKHYQKQADGLCRRLEKACISPKPQKPWDKDAWEIPRESIKLVKRLGAGQFGEVWMGYYNNSTKVAVKTLKPGTMSVQAFLEEANLMKTLQHDKLVRLYAVVTREEPIYIITEYMAKGSLLDFLKSDEGGKVLLPKLIDFSAQIAEGMAYIERKNYIHRDLRAANVLVSESLMCKIADFGLARVIEDNEYTAREGAKFPIKWTAPEAINFGCFTIKSDVWSFGILLYEIVTYGKIPYPGRTNADVMTALSQGYRMPRVENCPDELYDIMKMCWKEKAEERPTFDYLQSVLDDFYTATEGQYQQQP.

The disordered stretch occupies residues 1-62; the sequence is MGCIKSKGKD…GQRFQTKDPE (62 aa). G2 is lipidated: N-myristoyl glycine. C3 carries S-palmitoyl cysteine lipidation. Residues S11 and S13 each carry the phosphoserine modification. An SH3 domain is found at 63-123; the sequence is EQGDIVVALY…PSNYVAKLNT (61 aa). Positions 129–226 constitute an SH2 domain; it reads WFFKDITRKD…GLCRRLEKAC (98 aa). The residue at position 193 (Y193) is a Phosphotyrosine. Phosphoserine is present on S228. A Protein kinase domain is found at 247–501; sequence IKLVKRLGAG…YLQSVLDDFY (255 aa). ATP is bound by residues 253–261 and K275; that span reads LGAGQFGEV. 2 positions are modified to phosphotyrosine: Y306 and Y316. The Proton acceptor role is filled by D367. Residue Y397 is modified to Phosphotyrosine; by autocatalysis. Y460 and Y473 each carry phosphotyrosine. The residue at position 508 (Y508) is a Phosphotyrosine; by autocatalysis, CSK and MATK.

The protein belongs to the protein kinase superfamily. Tyr protein kinase family. SRC subfamily. In terms of assembly, interacts with TEC. Interacts (via SH2 domain) with FLT3 (tyrosine phosphorylated). Interacts with LIME1 and with CD79A upon activation of the B-cell antigen receptor. Interacts with the B-cell receptor complex. Interacts with phosphorylated THEMIS2. Interacts with EPOR. Interacts with MS4A2/FCER1B. Interaction (via the SH2 and SH3 domains) with MUC1 is stimulated by IL7 and the subsequent phosphorylation increases the binding between MUC1 and CTNNB1/beta-catenin. Interacts with ADAM15. Interacts with NDFIP2 and more weakly with NDFIP1. Interacts with FASLG. Interacts with KIT. Interacts with HCLS1. Interacts with FCGR2B. Interacts with FCGR1A; the interaction may be indirect. Interacts with CD19, CD22, CD79A and CD79B. Interacts (via SH3 domain) with CBLC, PPP1R15A and PDE4A. Interacts with TGFB1I1. Interacts (via SH3 domain) with PIK3R1, the regulatory subunit of phosphatidylinositol 3-kinase; this interaction enhances phosphatidylinositol 3-kinase activity. Interacts with CSF2RB, the common subunit of the IL3, IL5 and CSF2 receptors. Interacts with PAG1; identified in a complex with PAG1 and STAT3. Interacts with ABL1. Interacts with PTPN6/SHP-1. Interacts (via SH3 domain) with SCIMP (via proline-rich region). This interaction facilitates the phosphorylation of SCIMP on 'Tyr-107', which enhances binding of SCIMP to TLR4, and consequently the phosphorylation of TLR4 in response to stimulation by lipopolysaccharide in macrophages. Interacts with LPXN (via LD motif 3) and the interaction is induced upon B-cell antigen receptor (BCR) activation. Interacts (via SH3-domain) with ANKRD54 (via ankyrin repeat region) in an activation-independent status of LYN. Forms a multiprotein complex with ANKRD54 and HCLS1. Interacts (via SH2 and SH3 domains) with UNC119; leading to LYN activation. Interacts with CD36. Interacts with LYN. Interacts with SKAP1 and FYB1; this interaction promotes the phosphorylation of CLNK. Interacts with BCAR1/CAS and NEDD9/HEF1. (Microbial infection) Interacts with Epstein-Barr virus LMP2A. As to quaternary structure, (Microbial infection) Interacts with Herpes virus saimiri tyrosine kinase interacting protein (Tip). Post-translationally, ubiquitinated by CBL, leading to its degradation. Ubiquitination is SH3-dependent. In terms of processing, autophosphorylated. Phosphorylated on tyrosine residues in response to KIT signaling. Phosphorylation at Tyr-397 is required for optimal activity. Phosphorylation at Tyr-508 inhibits kinase activity. Phosphorylated at Tyr-508 by CSK. Dephosphorylated by PTPRC/CD45. Becomes rapidly phosphorylated upon activation of the B-cell receptor and the immunoglobulin receptor FCGR1A. Phosphorylated in response to ITGB1 in B-cells. Detected in monocytes (at protein level). Detected in placenta, and in fetal brain, lung, liver and kidney. Widely expressed in a variety of organs, tissues, and cell types such as epidermoid, hematopoietic, and neuronal cells. Expressed in primary neuroblastoma tumors.

Its subcellular location is the cell membrane. It is found in the nucleus. The protein localises to the cytoplasm. The protein resides in the perinuclear region. It localises to the golgi apparatus. Its subcellular location is the membrane. It carries out the reaction L-tyrosyl-[protein] + ATP = O-phospho-L-tyrosyl-[protein] + ADP + H(+). With respect to regulation, subject to autoinhibition, mediated by intramolecular interactions between the SH2 domain and the C-terminal phosphotyrosine. Phosphorylation at Tyr-397 is required for optimal activity. Phosphorylated by CSK at Tyr-508; phosphorylation at Tyr-508 inhibits kinase activity. Kinase activity is modulated by dephosphorylation by PTPRC/CD45. Inhibited by Dasatinib, PP2, and SU6656. Non-receptor tyrosine-protein kinase that transmits signals from cell surface receptors and plays an important role in the regulation of innate and adaptive immune responses, hematopoiesis, responses to growth factors and cytokines, integrin signaling, but also responses to DNA damage and genotoxic agents. Functions primarily as negative regulator, but can also function as activator, depending on the context. Required for the initiation of the B-cell response, but also for its down-regulation and termination. Plays an important role in the regulation of B-cell differentiation, proliferation, survival and apoptosis, and is important for immune self-tolerance. Acts downstream of several immune receptors, including the B-cell receptor, CD79A, CD79B, CD5, CD19, CD22, FCER1, FCGR2, FCGR1A, TLR2 and TLR4. Plays a role in the inflammatory response to bacterial lipopolysaccharide. Mediates the responses to cytokines and growth factors in hematopoietic progenitors, platelets, erythrocytes, and in mature myeloid cells, such as dendritic cells, neutrophils and eosinophils. Acts downstream of EPOR, KIT, MPL, the chemokine receptor CXCR4, as well as the receptors for IL3, IL5 and CSF2. Plays an important role in integrin signaling. Regulates cell proliferation, survival, differentiation, migration, adhesion, degranulation, and cytokine release. Involved in the regulation of endothelial activation, neutrophil adhesion and transendothelial migration. Down-regulates signaling pathways by phosphorylation of immunoreceptor tyrosine-based inhibitory motifs (ITIM), that then serve as binding sites for phosphatases, such as PTPN6/SHP-1, PTPN11/SHP-2 and INPP5D/SHIP-1, that modulate signaling by dephosphorylation of kinases and their substrates. Phosphorylates LIME1 in response to CD22 activation. Phosphorylates BTK, CBL, CD5, CD19, CD72, CD79A, CD79B, CSF2RB, DOK1, HCLS1, LILRB3/PIR-B, MS4A2/FCER1B, SYK and TEC. Promotes phosphorylation of SIRPA, PTPN6/SHP-1, PTPN11/SHP-2 and INPP5D/SHIP-1. Mediates phosphorylation of the BCR-ABL fusion protein. Required for rapid phosphorylation of FER in response to FCER1 activation. Mediates KIT phosphorylation. Acts as an effector of EPOR (erythropoietin receptor) in controlling KIT expression and may play a role in erythroid differentiation during the switch between proliferation and maturation. Depending on the context, activates or inhibits several signaling cascades. Regulates phosphatidylinositol 3-kinase activity and AKT1 activation. Regulates activation of the MAP kinase signaling cascade, including activation of MAP2K1/MEK1, MAPK1/ERK2, MAPK3/ERK1, MAPK8/JNK1 and MAPK9/JNK2. Mediates activation of STAT5A and/or STAT5B. Phosphorylates LPXN on 'Tyr-72'. Kinase activity facilitates TLR4-TLR6 heterodimerization and signal initiation. Phosphorylates SCIMP on 'Tyr-107'; this enhances binding of SCIMP to TLR4, promoting the phosphorylation of TLR4, and a selective cytokine response to lipopolysaccharide in macrophages. Phosphorylates CLNK. Phosphorylates BCAR1/CAS and NEDD9/HEF1. This chain is Tyrosine-protein kinase Lyn (LYN), found in Homo sapiens (Human).